The sequence spans 201 residues: Prostamide/prostaglandin F synthase (201 aa).

The protein belongs to the peroxiredoxin-like PRXL2 family. Prostamide/prostaglandin F synthase subfamily.

It is found in the cytoplasm. The protein localises to the cytosol. The catalysed reaction is prostaglandin H2 + [thioredoxin]-dithiol = prostaglandin F2alpha + [thioredoxin]-disulfide. The enzyme catalyses prostamide F2alpha + [thioredoxin]-disulfide = prostamide H2 + [thioredoxin]-dithiol. Catalyzes the reduction of prostaglandin-ethanolamide H(2) (prostamide H(2)) to prostamide F(2alpha) with NADPH as proton donor. Also able to reduce prostaglandin H(2) to prostaglandin F(2alpha). This is Prostamide/prostaglandin F synthase (prxl2b) from Aquarana catesbeiana (American bullfrog).